The chain runs to 543 residues: Carboxypeptidase Y homolog A (543 aa).

The N-terminal stretch at 1 to 17 (MRVLPATLLVGAATAAA) is a signal peptide. The propeptide occupies 18 to 124 (PPFQQILGLP…KLEAYDLRVK (107 aa)). 5 disulfide bridges follow: Cys-179/Cys-419, Cys-313/Cys-327, Cys-337/Cys-360, Cys-344/Cys-353, and Cys-382/Cys-389. An N-linked (GlcNAc...) asparagine glycan is attached at Asn-210. Ser-266 is an active-site residue. The active site involves Asp-458. Asn-509 carries an N-linked (GlcNAc...) asparagine glycan. His-520 is a catalytic residue.

The protein belongs to the peptidase S10 family.

The protein localises to the vacuole. It carries out the reaction Release of a C-terminal amino acid with broad specificity.. Vacuolar carboxypeptidase involved in degradation of small peptides. Digests preferentially peptides containing an aliphatic or hydrophobic residue in P1' position, as well as methionine, leucine or phenylalanine in P1 position of ester substrate. This chain is Carboxypeptidase Y homolog A (cpyA), found in Aspergillus fumigatus (strain ATCC MYA-4609 / CBS 101355 / FGSC A1100 / Af293) (Neosartorya fumigata).